A 763-amino-acid chain; its full sequence is Ras and Rab interactor 1 (763 aa).

At methionine 1 the chain carries N-acetylmethionine. The tract at residues 1–52 (MEDPGETGAHPLGATNLNFVPGHQQKEKPSTDPLYDTPDTRGVQAGGSQQPA) is disordered. Tyrosine 35 bears the Phosphotyrosine; by ABL1 and ABL2 mark. The 84-residue stretch at 68 to 151 (WLQLRANAAA…QLICGYCRTR (84 aa)) folds into the SH2 domain. Disordered regions lie at residues 177 to 200 (LNTKDQQRPSEAPPIPRLKARSPQ), 238 to 273 (STETSSPLSPPAVPPPPVPVLPGTSSSQTERLPPRQ), and 301 to 331 (QEVDCCSPSSSEEEGSSGSPTTSPRLSRPRH). Phosphoserine is present on residues serine 198, serine 246, serine 319, and serine 323. A compositionally biased stretch (pro residues) spans 245–257 (LSPPAVPPPPVPV). Over residues 316-326 (SSGSPTTSPRL) the composition is skewed to low complexity. At serine 340 the chain carries Phosphoserine; by PKD/PRKD1. In terms of domain architecture, VPS9 spans 445–587 (LSADGSLGRL…LSGLSQARAL (143 aa)). Serine 598 is subject to Phosphoserine. Residues 613 to 695 (FQHLLRVAYQ…GYLIYRRAER (83 aa)) form the Ras-associating domain. Residue arginine 681 is modified to Omega-N-methylarginine. The tract at residues 698–763 (TQGAVAEKAK…KAEGSQALEE (66 aa)) is disordered. Over residues 727 to 755 (REGKPRIAVDQEGKDQARGGHIGPEEQKA) the composition is skewed to basic and acidic residues.

It belongs to the RIN (Ras interaction/interference) family. In terms of assembly, interacts with the GTP-bound form of Ras proteins (NRAS, HRAS and KRAS). This interaction prevents the association between RAF1 and Ras. Interacts with 14-3-3 proteins YWHAB, YWHAE and YWHAZ when phosphorylated on Ser-340. Interacts with the SH3 domain of ABL1 and ABL2. Interacts with RAB5A. The interaction with Ras is probably regulated and antagonized by the interaction with 14-3-3 proteins. The interaction with 14-3-3 proteins is regulated by phosphorylation on Ser-340. Post-translationally, phosphorylated on tyrosine residues by ABL1 and ABL2. Phosphorylation at Ser-340 by PRKD1 induces interaction with 14-3-3 proteins. As to expression, highly expressed in brain. Weakly or no expressed in other tissues, except in testis, where it is expressed at intermediate level. In brain, it is mainly expressed in postnatal forebrain neurons in which it is localized in dendrites and colocalizes with Ras.

It is found in the cytoplasm. The protein resides in the membrane. Its subcellular location is the cytoskeleton. Its function is as follows. Ras effector protein, which may serve as an inhibitory modulator of neuronal plasticity in aversive memory formation. Can affect Ras signaling at different levels. First, by competing with RAF1 protein for binding to activated Ras. Second, by enhancing signaling from ABL1 and ABL2, which regulate cytoskeletal remodeling. Third, by activating RAB5A, possibly by functioning as a guanine nucleotide exchange factor (GEF) for RAB5A, by exchanging bound GDP for free GTP, and facilitating Ras-activated receptor endocytosis. In Mus musculus (Mouse), this protein is Ras and Rab interactor 1 (Rin1).